Here is a 184-residue protein sequence, read N- to C-terminus: Large ribosomal subunit protein uL22A (184 aa).

A Glycyl lysine isopeptide (Lys-Gly) (interchain with G-Cter in ubiquitin) cross-link involves residue lysine 46. Threonine 70 is modified (phosphothreonine).

Belongs to the universal ribosomal protein uL22 family. In terms of assembly, component of the large ribosomal subunit (LSU). Mature yeast ribosomes consist of a small (40S) and a large (60S) subunit. The 40S small subunit contains 1 molecule of ribosomal RNA (18S rRNA) and 33 different proteins (encoded by 57 genes). The large 60S subunit contains 3 rRNA molecules (25S, 5.8S and 5S rRNA) and 46 different proteins (encoded by 81 genes). uL22 is associated with the polypeptide exit tunnel.

Its subcellular location is the cytoplasm. Its function is as follows. Component of the ribosome, a large ribonucleoprotein complex responsible for the synthesis of proteins in the cell. The small ribosomal subunit (SSU) binds messenger RNAs (mRNAs) and translates the encoded message by selecting cognate aminoacyl-transfer RNA (tRNA) molecules. The large subunit (LSU) contains the ribosomal catalytic site termed the peptidyl transferase center (PTC), which catalyzes the formation of peptide bonds, thereby polymerizing the amino acids delivered by tRNAs into a polypeptide chain. The nascent polypeptides leave the ribosome through a tunnel in the LSU and interact with protein factors that function in enzymatic processing, targeting, and the membrane insertion of nascent chains at the exit of the ribosomal tunnel. This Saccharomyces cerevisiae (strain ATCC 204508 / S288c) (Baker's yeast) protein is Large ribosomal subunit protein uL22A.